The following is a 312-amino-acid chain: Protoheme IX farnesyltransferase (312 aa).

Transmembrane regions (helical) follow at residues 34-54 (LVIF…HPVL), 56-76 (FTAI…NMAL), 119-139 (ALVN…YVVI), 152-172 (IVIG…AATG), 179-199 (LLLF…LALF), 225-245 (ILLY…LGYF), 247-267 (WVYG…AINV), and 283-303 (LFAF…LDVL).

This sequence belongs to the UbiA prenyltransferase family. Protoheme IX farnesyltransferase subfamily.

The protein localises to the cell inner membrane. It catalyses the reaction heme b + (2E,6E)-farnesyl diphosphate + H2O = Fe(II)-heme o + diphosphate. It participates in porphyrin-containing compound metabolism; heme O biosynthesis; heme O from protoheme: step 1/1. Its function is as follows. Converts heme B (protoheme IX) to heme O by substitution of the vinyl group on carbon 2 of heme B porphyrin ring with a hydroxyethyl farnesyl side group. This is Protoheme IX farnesyltransferase from Nitrobacter hamburgensis (strain DSM 10229 / NCIMB 13809 / X14).